The sequence spans 278 residues: Sulfate transport system permease protein CysT (278 aa).

7 consecutive transmembrane segments (helical) span residues 22–42, 67–87, 102–122, 139–159, 188–208, 217–237, and 246–266; these read FTWV…FLKS, FGLS…IAWV, FIDL…ATVY, IAFT…PFVV, FWRV…AQGF, SVVI…VLIF, and AGAT…LFVI. Residues 63–266 enclose the ABC transmembrane type-1 domain; the sequence is YEVTFGLSLA…LFSLVILFVI (204 aa).

Belongs to the binding-protein-dependent transport system permease family. CysTW subfamily. In terms of assembly, the complex is composed of two ATP-binding proteins (CysA), two transmembrane proteins (CysT and CysW) and a solute-binding protein (CysP).

It localises to the cell inner membrane. Its function is as follows. Part of the ABC transporter complex CysAWTP (TC 3.A.1.6.1) involved in sulfate/thiosulfate import. Probably responsible for the translocation of the substrate across the membrane. This chain is Sulfate transport system permease protein CysT (cysT), found in Synechococcus elongatus (strain ATCC 33912 / PCC 7942 / FACHB-805) (Anacystis nidulans R2).